An 83-amino-acid chain; its full sequence is Exodeoxyribonuclease 7 small subunit (83 aa).

This sequence belongs to the XseB family. As to quaternary structure, heterooligomer composed of large and small subunits.

Its subcellular location is the cytoplasm. The enzyme catalyses Exonucleolytic cleavage in either 5'- to 3'- or 3'- to 5'-direction to yield nucleoside 5'-phosphates.. In terms of biological role, bidirectionally degrades single-stranded DNA into large acid-insoluble oligonucleotides, which are then degraded further into small acid-soluble oligonucleotides. This chain is Exodeoxyribonuclease 7 small subunit, found in Bradyrhizobium diazoefficiens (strain JCM 10833 / BCRC 13528 / IAM 13628 / NBRC 14792 / USDA 110).